Here is a 363-residue protein sequence, read N- to C-terminus: UDP-3-O-acylglucosamine N-acyltransferase (363 aa).

The Proton acceptor role is filled by His252.

This sequence belongs to the transferase hexapeptide repeat family. LpxD subfamily. As to quaternary structure, homotrimer.

It carries out the reaction a UDP-3-O-[(3R)-3-hydroxyacyl]-alpha-D-glucosamine + a (3R)-hydroxyacyl-[ACP] = a UDP-2-N,3-O-bis[(3R)-3-hydroxyacyl]-alpha-D-glucosamine + holo-[ACP] + H(+). It participates in bacterial outer membrane biogenesis; LPS lipid A biosynthesis. In terms of biological role, catalyzes the N-acylation of UDP-3-O-acylglucosamine using 3-hydroxyacyl-ACP as the acyl donor. Is involved in the biosynthesis of lipid A, a phosphorylated glycolipid that anchors the lipopolysaccharide to the outer membrane of the cell. The chain is UDP-3-O-acylglucosamine N-acyltransferase from Cupriavidus taiwanensis (strain DSM 17343 / BCRC 17206 / CCUG 44338 / CIP 107171 / LMG 19424 / R1) (Ralstonia taiwanensis (strain LMG 19424)).